The following is a 441-amino-acid chain: Ribosomal protein uS12 methylthiotransferase RimO (441 aa).

The MTTase N-terminal domain occupies 7–117 (PKISFVSLGC…VLEAVHRAKP (111 aa)). Residues Cys16, Cys52, Cys81, Cys148, Cys152, and Cys155 each coordinate [4Fe-4S] cluster. The region spanning 134–371 (LTPRHYAYLK…MARQQVISAR (238 aa)) is the Radical SAM core domain. In terms of domain architecture, TRAM spans 374–440 (KRKVGTRQQI…AYDLHGTVAG (67 aa)).

Belongs to the methylthiotransferase family. RimO subfamily. The cofactor is [4Fe-4S] cluster.

Its subcellular location is the cytoplasm. The catalysed reaction is L-aspartate(89)-[ribosomal protein uS12]-hydrogen + (sulfur carrier)-SH + AH2 + 2 S-adenosyl-L-methionine = 3-methylsulfanyl-L-aspartate(89)-[ribosomal protein uS12]-hydrogen + (sulfur carrier)-H + 5'-deoxyadenosine + L-methionine + A + S-adenosyl-L-homocysteine + 2 H(+). Functionally, catalyzes the methylthiolation of an aspartic acid residue of ribosomal protein uS12. The polypeptide is Ribosomal protein uS12 methylthiotransferase RimO (Rhodopseudomonas palustris (strain BisB5)).